We begin with the raw amino-acid sequence, 192 residues long: Dynein axonemal light chain 1 (192 aa).

LRR repeat units lie at residues 49–70 (NCER…NGLK), 71–92 (NLKI…EAVG), 94–115 (TLEE…HVMK), and 116–137 (KLKV…LKLA). An LRRCT domain is found at 150-192 (NPLEEKYSADGNWIEEATKRLPKLKKLDGNPVIKQEEETEGES).

It belongs to the dynein light chain LC1-type family. In terms of assembly, interacts with DNAH5, a outer arm dynein heavy chain. Interacts with tubulin located within the A-tubule of the outer doublets in a ATP-independent manner.

It localises to the cytoplasm. Its subcellular location is the cytoskeleton. The protein resides in the cilium axoneme. In terms of biological role, part of the multisubunit axonemal ATPase complexes that generate the force for cilia motility and govern beat frequency. Component of the outer arm dynein (ODA). May be involved in a mechanosensory feedback mechanism controlling ODA activity based on external conformational cues by tethering the outer arm dynein heavy chain (DNAH5) to the microtubule within the axoneme. The protein is Dynein axonemal light chain 1 (dnal1) of Danio rerio (Zebrafish).